The following is a 122-amino-acid chain: MINKTAKNTKRLRRAERVRYKLRQTSERPRLVFNKTNRYLTAQIIDDAKGVTLVYATTLEKDFPKHENSKKSKSAATELGKVVADKAKKAGVSQVVLDRSGMVYHGRIAAFADSAREGGLEF.

It belongs to the universal ribosomal protein uL18 family. Part of the 50S ribosomal subunit; part of the 5S rRNA/L5/L18/L25 subcomplex. Contacts the 5S and 23S rRNAs.

In terms of biological role, this is one of the proteins that bind and probably mediate the attachment of the 5S RNA into the large ribosomal subunit, where it forms part of the central protuberance. This chain is Large ribosomal subunit protein uL18, found in Leptospira biflexa serovar Patoc (strain Patoc 1 / Ames).